A 686-amino-acid polypeptide reads, in one-letter code: Asparagine-rich protein (686 aa).

The signal sequence occupies residues 1 to 18; it reads MKGTSALLLIGFFHATIS. Disordered regions lie at residues 34–73, 125–148, and 201–236; these read KRGN…DKTA, SLTS…SSSI, and ITRQ…QPPN. Over residues 37 to 49 the composition is skewed to polar residues; sequence NLNTGGQITSNSA. A compositionally biased stretch (basic and acidic residues) spans 62–73; sequence EPPKRRNTDKTA.

In terms of tissue distribution, prismatic layer of shell (at protein level). Expressed primarily in the mantle with highest level in the mantle edge and lower level in the mantle pallium.

The protein localises to the secreted. This chain is Asparagine-rich protein, found in Margaritifera margaritifera (Freshwater pearl mussel).